Here is an 81-residue protein sequence, read N- to C-terminus: Photosystem I iron-sulfur center (81 aa).

4Fe-4S ferredoxin-type domains lie at S2 to W31 and I39 to Y68. Positions 11, 14, 17, 21, 48, 51, 54, and 58 each coordinate [4Fe-4S] cluster.

As to quaternary structure, the eukaryotic PSI reaction center is composed of at least 11 subunits. [4Fe-4S] cluster is required as a cofactor.

It localises to the plastid. It is found in the chloroplast thylakoid membrane. The enzyme catalyses reduced [plastocyanin] + hnu + oxidized [2Fe-2S]-[ferredoxin] = oxidized [plastocyanin] + reduced [2Fe-2S]-[ferredoxin]. Functionally, apoprotein for the two 4Fe-4S centers FA and FB of photosystem I (PSI); essential for photochemical activity. FB is the terminal electron acceptor of PSI, donating electrons to ferredoxin. The C-terminus interacts with PsaA/B/D and helps assemble the protein into the PSI complex. Required for binding of PsaD and PsaE to PSI. PSI is a plastocyanin-ferredoxin oxidoreductase, converting photonic excitation into a charge separation, which transfers an electron from the donor P700 chlorophyll pair to the spectroscopically characterized acceptors A0, A1, FX, FA and FB in turn. The sequence is that of Photosystem I iron-sulfur center from Chaetosphaeridium globosum (Charophycean green alga).